A 432-amino-acid polypeptide reads, in one-letter code: Enolase (432 aa).

Gln167 serves as a coordination point for (2R)-2-phosphoglycerate. Glu209 acts as the Proton donor in catalysis. Positions 246, 290, and 317 each coordinate Mg(2+). (2R)-2-phosphoglycerate contacts are provided by Lys342, Arg371, Ser372, and Lys393. Residue Lys342 is the Proton acceptor of the active site.

The protein belongs to the enolase family. As to quaternary structure, component of the RNA degradosome, a multiprotein complex involved in RNA processing and mRNA degradation. Mg(2+) is required as a cofactor.

It localises to the cytoplasm. Its subcellular location is the secreted. The protein localises to the cell surface. It carries out the reaction (2R)-2-phosphoglycerate = phosphoenolpyruvate + H2O. It functions in the pathway carbohydrate degradation; glycolysis; pyruvate from D-glyceraldehyde 3-phosphate: step 4/5. Functionally, catalyzes the reversible conversion of 2-phosphoglycerate (2-PG) into phosphoenolpyruvate (PEP). It is essential for the degradation of carbohydrates via glycolysis. In Shigella sonnei (strain Ss046), this protein is Enolase.